Here is a 489-residue protein sequence, read N- to C-terminus: Long chain base biosynthesis protein 2b (489 aa).

The chain crosses the membrane as a helical span at residues I2–F22. K311 carries the N6-(pyridoxal phosphate)lysine modification.

Belongs to the class-II pyridoxal-phosphate-dependent aminotransferase family. As to quaternary structure, heterodimer with LCB1. Component of the serine palmitoyltransferase (SPT) complex, composed of LCB1 and LCB2 (LCB2a or LCB2b). Pyridoxal 5'-phosphate serves as cofactor. Ubiquitous with the highest expression in flowers.

The protein localises to the endoplasmic reticulum membrane. The catalysed reaction is L-serine + hexadecanoyl-CoA + H(+) = 3-oxosphinganine + CO2 + CoA. Its pathway is lipid metabolism; sphingolipid metabolism. Its function is as follows. Serine palmitoyltransferase (SPT). The heterodimer formed with LCB1 constitutes the catalytic core. Plays an important role during male gametogenesis and embryogenesis. In Arabidopsis thaliana (Mouse-ear cress), this protein is Long chain base biosynthesis protein 2b (LCB2b).